Consider the following 911-residue polypeptide: DNA ligase 4 (911 aa).

ATP-binding residues include glutamate 271, threonine 272, lysine 273, leucine 274, arginine 278, glutamate 331, lysine 345, phenylalanine 367, glutamate 427, lysine 432, lysine 449, and lysine 451. Residue lysine 273 is the N6-AMP-lysine intermediate of the active site. Glutamate 331 serves as a coordination point for Mg(2+). Glutamate 427 contacts Mg(2+). The interval 610 to 620 (LASKHFYVGGD) is required for catalytic activity. 2 BRCT domains span residues 654 to 743 (KISN…PHFM) and 808 to 911 (SPLS…QYLI).

This sequence belongs to the ATP-dependent DNA ligase family. Interacts with XRCC4; the LIG4-XRCC4 subcomplex has a 1:2 stoichiometry and XRCC4 is required for LIG4 stability. Component of the core long-range non-homologous end joining (NHEJ) complex (also named DNA-PK complex) composed of PRKDC, LIG4, XRCC4, XRCC6/Ku70, XRCC5/Ku86 and NHEJ1/XLF. Additional component of the NHEJ complex includes PAXX. Following autophosphorylation, PRKDC dissociates from DNA, leading to formation of the short-range NHEJ complex, composed of LIG4, XRCC4, XRCC6/Ku70, XRCC5/Ku86 and NHEJ1/XLF. Interacts with DCLRE1C; the interaction is direct. Interacts with APLF. It depends on Mg(2+) as a cofactor.

The protein resides in the nucleus. The enzyme catalyses ATP + (deoxyribonucleotide)n-3'-hydroxyl + 5'-phospho-(deoxyribonucleotide)m = (deoxyribonucleotide)n+m + AMP + diphosphate.. DNA ligase involved in DNA non-homologous end joining (NHEJ); required for double-strand break (DSB) repair and V(D)J recombination. Catalyzes the NHEJ ligation step of the broken DNA during DSB repair by resealing the DNA breaks after the gap filling is completed. Joins single-strand breaks in a double-stranded polydeoxynucleotide in an ATP-dependent reaction. LIG4 is mechanistically flexible: it can ligate nicks as well as compatible DNA overhangs alone, while in the presence of XRCC4, it can ligate ends with 2-nucleotides (nt) microhomology and 1-nt gaps. Forms a subcomplex with XRCC4; the LIG4-XRCC4 subcomplex is responsible for the NHEJ ligation step and XRCC4 enhances the joining activity of LIG4. Binding of the LIG4-XRCC4 complex to DNA ends is dependent on the assembly of the DNA-dependent protein kinase complex DNA-PK to these DNA ends. LIG4 regulates nuclear localization of XRCC4. This is DNA ligase 4 from Pongo abelii (Sumatran orangutan).